Consider the following 178-residue polypeptide: MGRTRENKEDVVADLKELLKESQLAVIIDYQGLSVAEITDLRRRIRPVGGTCKIAKNTLVRIAVDGDQNWQPMQEYLKGSSAVLLVQEDVGGIVKAYKSFQKDSKKTELRGGVMEGRSLTKDQVEALADLPSKEQLYAQIAGAINSITAKIAIGIKEVPSSVARGLQAYSEKEQGSES.

This sequence belongs to the universal ribosomal protein uL10 family. Part of the ribosomal stalk of the 50S ribosomal subunit. The N-terminus interacts with L11 and the large rRNA to form the base of the stalk. The C-terminus forms an elongated spine to which L12 dimers bind in a sequential fashion forming a multimeric L10(L12)X complex.

Its function is as follows. Forms part of the ribosomal stalk, playing a central role in the interaction of the ribosome with GTP-bound translation factors. The polypeptide is Large ribosomal subunit protein uL10 (Gloeothece citriformis (strain PCC 7424) (Cyanothece sp. (strain PCC 7424))).